Reading from the N-terminus, the 932-residue chain is Protein translocase subunit SecA (932 aa).

ATP-binding positions include Gln-90, 108–112 (GEGKT), and Asp-498.

This sequence belongs to the SecA family. Monomer and homodimer. Part of the essential Sec protein translocation apparatus which comprises SecA, SecYEG and auxiliary proteins SecDF. Other proteins may also be involved.

It is found in the cell inner membrane. The protein localises to the cellular thylakoid membrane. Its subcellular location is the cytoplasm. The catalysed reaction is ATP + H2O + cellular proteinSide 1 = ADP + phosphate + cellular proteinSide 2.. Functionally, part of the Sec protein translocase complex. Interacts with the SecYEG preprotein conducting channel. Has a central role in coupling the hydrolysis of ATP to the transfer of proteins into and across the cell membrane, serving as an ATP-driven molecular motor driving the stepwise translocation of polypeptide chains across the membrane. Probably participates in protein translocation into and across both the cytoplasmic and thylakoid membranes in cyanobacterial cells. This Synechocystis sp. (strain ATCC 27184 / PCC 6803 / Kazusa) protein is Protein translocase subunit SecA.